The sequence spans 50 residues: Large ribosomal subunit protein eL39 (50 aa).

This sequence belongs to the eukaryotic ribosomal protein eL39 family.

The sequence is that of Large ribosomal subunit protein eL39 from Methanosphaerula palustris (strain ATCC BAA-1556 / DSM 19958 / E1-9c).